The following is a 188-amino-acid chain: ATP synthase subunit b 2 (188 aa).

Residues 1–23 are disordered; the sequence is MAEGHGDANGATAHTAADGGHKA. Residues 8–18 are compositionally biased toward low complexity; it reads ANGATAHTAAD. Residues 37–57 traverse the membrane as a helical segment; that stretch reads LVSLLIAFVALYLIVSKIALP.

This sequence belongs to the ATPase B chain family. As to quaternary structure, F-type ATPases have 2 components, F(1) - the catalytic core - and F(0) - the membrane proton channel. F(1) has five subunits: alpha(3), beta(3), gamma(1), delta(1), epsilon(1). F(0) has three main subunits: a(1), b(2) and c(10-14). The alpha and beta chains form an alternating ring which encloses part of the gamma chain. F(1) is attached to F(0) by a central stalk formed by the gamma and epsilon chains, while a peripheral stalk is formed by the delta and b chains.

It localises to the cell inner membrane. F(1)F(0) ATP synthase produces ATP from ADP in the presence of a proton or sodium gradient. F-type ATPases consist of two structural domains, F(1) containing the extramembraneous catalytic core and F(0) containing the membrane proton channel, linked together by a central stalk and a peripheral stalk. During catalysis, ATP synthesis in the catalytic domain of F(1) is coupled via a rotary mechanism of the central stalk subunits to proton translocation. Functionally, component of the F(0) channel, it forms part of the peripheral stalk, linking F(1) to F(0). The b'-subunit is a diverged and duplicated form of b found in plants and photosynthetic bacteria. In Rhodopseudomonas palustris (strain BisB18), this protein is ATP synthase subunit b 2 (atpF2).